The following is a 589-amino-acid chain: Ubiquilin-1 (589 aa).

Residues 1 to 11 show a composition bias toward gly residues; it reads MAESGESGGPP. Disordered stretches follow at residues 1 to 35 and 110 to 145; these read MAESGESGGPPGSQDSAAGAEGAGAPAAAASAEPK and NRPQDHSAQQTNTAGSNVTTSSTPNSNSTSGSATSN. The residue at position 2 (alanine 2) is an N-acetylalanine. Low complexity predominate over residues 12–35; that stretch reads GSQDSAAGAEGAGAPAAAASAEPK. One can recognise a Ubiquitin-like domain in the interval 37–111; it reads MKVTVKTPKE…VHLVIKTQNR (75 aa). Positions 110-124 are enriched in polar residues; that stretch reads NRPQDHSAQQTNTAG. Residues 125 to 145 show a composition bias toward low complexity; the sequence is SNVTTSSTPNSNSTSGSATSN. Residues 178-428 are interaction with UBXN4; it reads QLLSNPEMMV…LNNPLFAGNP (251 aa). STI1 domains are found at residues 182-210 and 212-251; these read NPEMMVQIMENPFVQSMLSNPDLMRQLIM and NPQMQQLIQRNPEISHMLNNPDIMRQTLELARNPAMMQEM. Positions 295 to 371 are disordered; the sequence is PFASLVSNTS…NLVPGVGASM (77 aa). The span at 299-313 shows a compositional bias: polar residues; that stretch reads LVSNTSSGEGSQPSR. The segment covering 327–360 has biased composition (low complexity); that stretch reads QTSQSSSASSGTASTVGGTTGSTASGTSGQSTTA. STI1 domains follow at residues 387–434 and 438–470; these read NPQL…QEQM and LPTFLQQMQNPDTLSAMSNPRAMQALLQIQQGL. The disordered stretch occupies residues 488–520; the sequence is LGALGSTGGSSGTNGSNATPSENTSPTAGTTEP. Gly residues predominate over residues 489 to 499; the sequence is GALGSTGGSSG. A compositionally biased stretch (polar residues) spans 509 to 520; sequence ENTSPTAGTTEP. One can recognise a UBA domain in the interval 546–586; that stretch reads RFQQQLEQLSAMGFLNREANLQALIATGGDINAAIERLLGS.

Monomer and homodimer. Heterodimer with UBQLN2. Binds CD47, NBL1, GABRA1, GABRA2, GABRA3, GABRA6, GABRB1, GABRB2 and GABRB3. Binds UBE3A, BTRC, P4HB and MTOR. Interacts with the proteasome 19S subunit. Interacts (via ubiquitin-like domain) with TREX1; the interaction is direct and may control TREX1 subcellular location. Forms a complex with UBXN4 and VCP. Interacts (via UBA domain) with UBQLN4 (via ubiquitin-like domain). Found in a complex with UBQLN2 and MAP1LC3A/B/C. The monomeric form interacts with PSEN2. The monomeric form interacts with PSEN1. Interacts with ORAI1. Interacts (via UBA domain) with TICAM1. Interacts with EPS15. Interacts (via UBA domain) with UBA52 and (via ubiquitin-like domain) with PSMD3 and PSMD4. Interacts with HERPUD1. Interacts with MAP1LC3A/B/C in the presence of UBQLN4. Interacts (via ubiquitin-like domain) with EPS15 (via UIM domains) and both the ubiquitinated and non-ubiquitinated forms can interact with EPS15. Interacts (via ubiquitin-like domain) with EPS15L1, HGS (via UIM domain) and STAM2 (via UIM domain). Interacts with BCL2L10/BCL-B; in the cytoplasm. In terms of assembly, monomeric form interacts with PSEN1. Post-translationally, degraded during both macroautophagy and during chaperone-mediated autophagy (CMA). Phosphorylated. In terms of processing, ubiquitinated. In terms of tissue distribution, brain (at protein level). Ubiquitous. Highly expressed throughout the brain; detected in neurons and in neuropathological lesions, such as neurofibrillary tangles and Lewy bodies. Highly expressed in heart, placenta, pancreas, lung, liver, skeletal muscle and kidney.

The protein localises to the cytoplasm. The protein resides in the nucleus. It localises to the endoplasmic reticulum. Its subcellular location is the cytoplasmic vesicle. It is found in the autophagosome. The protein localises to the cell membrane. Its function is as follows. Plays an important role in the regulation of different protein degradation mechanisms and pathways including ubiquitin-proteasome system (UPS), autophagy and endoplasmic reticulum-associated protein degradation (ERAD) pathway. Mediates the proteasomal targeting of misfolded or accumulated proteins for degradation by binding (via UBA domain) to their polyubiquitin chains and by interacting (via ubiquitin-like domain) with the subunits of the proteasome. Plays a role in the ERAD pathway via its interaction with ER-localized proteins UBXN4, VCP and HERPUD1 and may form a link between the polyubiquitinated ERAD substrates and the proteasome. Involved in the regulation of macroautophagy and autophagosome formation; required for maturation of autophagy-related protein LC3 from the cytosolic form LC3-I to the membrane-bound form LC3-II and may assist in the maturation of autophagosomes to autolysosomes by mediating autophagosome-lysosome fusion. Negatively regulates the TICAM1/TRIF-dependent toll-like receptor signaling pathway by decreasing the abundance of TICAM1 via the autophagic pathway. Promotes the ubiquitination and lysosomal degradation of ORAI1, consequently down-regulating the ORAI1-mediated Ca2+ mobilization. Suppresses the maturation and proteasomal degradation of amyloid beta A4 protein (A4) by stimulating the lysine 63 (K63)-linked polyubiquitination. Delays the maturation of A4 by sequestering it in the Golgi apparatus and preventing its transport to the cell surface for subsequent processing. Ubiquitinates BCL2L10 and thereby stabilizes protein abundance. Functionally, plays a role in unfolded protein response (UPR) by attenuating the induction of UPR-inducible genes, DDTI3/CHOP, HSPA5 and PDIA2 during ER stress. Plays a key role in the regulation of the levels of PSEN1 by targeting its accumulation to aggresomes which may then be removed from cells by autophagocytosis. Plays a role in unfolded protein response (UPR) by attenuating the induction of UPR-inducible genes, DDTI3/CHOP, HSPA5 and PDIA2 during ER stress. This chain is Ubiquilin-1 (UBQLN1), found in Homo sapiens (Human).